The primary structure comprises 686 residues: Solute carrier family 22 member 23 (686 aa).

2 disordered regions span residues 1 to 62 (MAID…GGGP) and 169 to 193 (GNRS…DKGD). N-linked (GlcNAc...) asparagine glycosylation is present at asparagine 24. The next 2 membrane-spanning stretches (helical) occupy residues 234-254 (FSLL…ADWV) and 258-278 (PVLL…ALSV). Asparagine 279 is a glycosylation site (N-linked (GlcNAc...) asparagine). Transmembrane regions (helical) follow at residues 288 to 308 (FFEG…RIEL), 315 to 335 (FMIT…MPGL), 344 to 364 (VLQA…SIFP), 467 to 487 (ADYY…CVVV), 494 to 514 (GGLL…LGLL), 538 to 558 (IAFS…SVFF), 569 to 589 (CGGL…APII), and 598 to 618 (FLHH…ILLL).

Belongs to the major facilitator (TC 2.A.1) superfamily. Organic cation transporter (TC 2.A.1.19) family.

The protein localises to the membrane. In Homo sapiens (Human), this protein is Solute carrier family 22 member 23 (SLC22A23).